Consider the following 226-residue polypeptide: Leucyl/phenylalanyl-tRNA--protein transferase (226 aa).

This sequence belongs to the L/F-transferase family.

The protein localises to the cytoplasm. The catalysed reaction is N-terminal L-lysyl-[protein] + L-leucyl-tRNA(Leu) = N-terminal L-leucyl-L-lysyl-[protein] + tRNA(Leu) + H(+). It carries out the reaction N-terminal L-arginyl-[protein] + L-leucyl-tRNA(Leu) = N-terminal L-leucyl-L-arginyl-[protein] + tRNA(Leu) + H(+). The enzyme catalyses L-phenylalanyl-tRNA(Phe) + an N-terminal L-alpha-aminoacyl-[protein] = an N-terminal L-phenylalanyl-L-alpha-aminoacyl-[protein] + tRNA(Phe). Functions in the N-end rule pathway of protein degradation where it conjugates Leu, Phe and, less efficiently, Met from aminoacyl-tRNAs to the N-termini of proteins containing an N-terminal arginine or lysine. The protein is Leucyl/phenylalanyl-tRNA--protein transferase of Pseudomonas entomophila (strain L48).